We begin with the raw amino-acid sequence, 309 residues long: Methionyl-tRNA formyltransferase (309 aa).

109–112 (SLLP) lines the (6S)-5,6,7,8-tetrahydrofolate pocket.

Belongs to the Fmt family.

It catalyses the reaction L-methionyl-tRNA(fMet) + (6R)-10-formyltetrahydrofolate = N-formyl-L-methionyl-tRNA(fMet) + (6S)-5,6,7,8-tetrahydrofolate + H(+). Its function is as follows. Attaches a formyl group to the free amino group of methionyl-tRNA(fMet). The formyl group appears to play a dual role in the initiator identity of N-formylmethionyl-tRNA by promoting its recognition by IF2 and preventing the misappropriation of this tRNA by the elongation apparatus. The chain is Methionyl-tRNA formyltransferase from Clostridium botulinum (strain Alaska E43 / Type E3).